Reading from the N-terminus, the 69-residue chain is uncharacterized protein (69 aa).

The helical transmembrane segment at 13–35 threads the bilayer; the sequence is IRSINPTLLNFINYFLLIVPQFI.

It localises to the membrane. This is an uncharacterized protein from Saccharomyces cerevisiae (strain ATCC 204508 / S288c) (Baker's yeast).